A 213-amino-acid polypeptide reads, in one-letter code: Viral dihydrofolate reductase (213 aa).

One can recognise a DHFR domain in the interval L4–K184. Residues A10 and G16–H22 contribute to the NADP(+) site. Substrate is bound at residue D31–Q36. K54–T56 is a binding site for NADP(+). R70 is a binding site for substrate. Residues S76 to K78 and G116 to D123 each bind NADP(+).

Belongs to the dihydrofolate reductase family.

The enzyme catalyses (6S)-5,6,7,8-tetrahydrofolate + NADP(+) = 7,8-dihydrofolate + NADPH + H(+). It functions in the pathway cofactor biosynthesis; tetrahydrofolate biosynthesis; 5,6,7,8-tetrahydrofolate from 7,8-dihydrofolate: step 1/1. Functionally, key enzyme in folate metabolism. Catalyzes an essential reaction for de novo glycine and purine synthesis, and for DNA precursor synthesis. The chain is Viral dihydrofolate reductase (DHFR) from Saimiri sciureus (Common squirrel monkey).